Consider the following 108-residue polypeptide: Inner membrane protein H108R (108 aa).

Residues leucine 10–leucine 32 form a helical membrane-spanning segment. The span at glutamate 49–serine 64 shows a compositional bias: polar residues. Residues glutamate 49–lysine 69 form a disordered region. A glycan (N-linked (GlcNAc...) asparagine; by host) is linked at asparagine 50.

Belongs to the asfivirus H108R family.

The protein resides in the virion membrane. This chain is Inner membrane protein H108R, found in Ornithodoros (relapsing fever ticks).